Consider the following 415-residue polypeptide: ER-derived vesicles protein ERV46 (415 aa).

The Cytoplasmic portion of the chain corresponds to 1–24; it reads MKRSTLLSLDAFAKTEEDVRVRTR. The chain crosses the membrane as a helical span at residues 25-45; it reads AGGLITLSCILTTLFLLVNEW. Residues 46–376 are Lumenal-facing; sequence GQFNSVVTRP…VINKEQHGQT (331 aa). The helical transmembrane segment at 377-397 threads the bilayer; the sequence is WSGFILNCITSIGGVLAVGTV. Over 398–415 the chain is Cytoplasmic; the sequence is MDKLFYKAQRSIWGKKSQ. The short motif at 402–403 is the Phenylalanine-tyrosine motif element; the sequence is FY.

It belongs to the ERGIC family. Interacts with ERV41.

The protein resides in the endoplasmic reticulum membrane. It is found in the golgi apparatus membrane. Functionally, constituent of COPII-coated endoplasmic reticulum-derived transport vesicles. Required for efficient transport of a subset of secretory proteins to the Golgi. The C-terminal Phe-Tyr motif is required for exit from the endoplasmic reticulum. Facilitates retrograde transport from the Golgi to the endoplasmic reticulum. The sequence is that of ER-derived vesicles protein ERV46 (ERV46) from Saccharomyces cerevisiae (strain ATCC 204508 / S288c) (Baker's yeast).